A 437-amino-acid chain; its full sequence is GTPase Obg (437 aa).

Residues 2–160 (SMFLDTAKIK…RNLELELKVL (159 aa)) enclose the Obg domain. Residues 161–338 (ADVGLVGFPS…LLEATAELLE (178 aa)) form the OBG-type G domain. Residues 167–174 (GFPSVGKS), 192–196 (FTTIV), 214–217 (DLPG), 284–287 (NKMD), and 319–321 (SGI) each bind GTP. Residues Ser174 and Thr194 each contribute to the Mg(2+) site. The OCT domain maps to 359–437 (GFNPDEPEFA…IGKFEFEFVD (79 aa)).

It belongs to the TRAFAC class OBG-HflX-like GTPase superfamily. OBG GTPase family. As to quaternary structure, monomer. It depends on Mg(2+) as a cofactor.

It is found in the cytoplasm. An essential GTPase which binds GTP, GDP and possibly (p)ppGpp with moderate affinity, with high nucleotide exchange rates and a fairly low GTP hydrolysis rate. Plays a role in control of the cell cycle, stress response, ribosome biogenesis and in those bacteria that undergo differentiation, in morphogenesis control. In Streptococcus suis (strain 98HAH33), this protein is GTPase Obg.